Consider the following 362-residue polypeptide: tRNA-specific 2-thiouridylase MnmA 3 (362 aa).

ATP contacts are provided by residues 11-18 (GMSGGIDS) and M37. The active-site Nucleophile is the C91. A disulfide bond links C91 and C188. Position 115 (G115) interacts with ATP. The segment at 137–139 (KDQ) is interaction with tRNA. C188 functions as the Cysteine persulfide intermediate in the catalytic mechanism. The segment at 296–297 (RY) is interaction with tRNA.

This sequence belongs to the MnmA/TRMU family.

The protein localises to the cytoplasm. The catalysed reaction is S-sulfanyl-L-cysteinyl-[protein] + uridine(34) in tRNA + AH2 + ATP = 2-thiouridine(34) in tRNA + L-cysteinyl-[protein] + A + AMP + diphosphate + H(+). Functionally, catalyzes the 2-thiolation of uridine at the wobble position (U34) of tRNA, leading to the formation of s(2)U34. In Bacteroides fragilis (strain ATCC 25285 / DSM 2151 / CCUG 4856 / JCM 11019 / LMG 10263 / NCTC 9343 / Onslow / VPI 2553 / EN-2), this protein is tRNA-specific 2-thiouridylase MnmA 3.